Reading from the N-terminus, the 768-residue chain is Probable dipeptidyl peptidase 4 (768 aa).

The N-terminal stretch at M1–A17 is a signal peptide. N38, N81, N104, N113, N221, N282, and N468 each carry an N-linked (GlcNAc...) asparagine glycan. Catalysis depends on S616, which acts as the Charge relay system. An N-linked (GlcNAc...) asparagine glycan is attached at N668. Active-site charge relay system residues include D693 and H728.

The protein belongs to the peptidase S9B family.

The protein localises to the secreted. It carries out the reaction Release of an N-terminal dipeptide, Xaa-Yaa-|-Zaa-, from a polypeptide, preferentially when Yaa is Pro, provided Zaa is neither Pro nor hydroxyproline.. Its function is as follows. Extracellular dipeptidyl-peptidase which removes N-terminal dipeptides sequentially from polypeptides having unsubstituted N-termini provided that the penultimate residue is proline. The protein is Probable dipeptidyl peptidase 4 (dpp4) of Aspergillus clavatus (strain ATCC 1007 / CBS 513.65 / DSM 816 / NCTC 3887 / NRRL 1 / QM 1276 / 107).